The following is a 214-amino-acid chain: Leucyl/phenylalanyl-tRNA--protein transferase (214 aa).

Belongs to the L/F-transferase family.

It localises to the cytoplasm. The enzyme catalyses N-terminal L-lysyl-[protein] + L-leucyl-tRNA(Leu) = N-terminal L-leucyl-L-lysyl-[protein] + tRNA(Leu) + H(+). The catalysed reaction is N-terminal L-arginyl-[protein] + L-leucyl-tRNA(Leu) = N-terminal L-leucyl-L-arginyl-[protein] + tRNA(Leu) + H(+). It catalyses the reaction L-phenylalanyl-tRNA(Phe) + an N-terminal L-alpha-aminoacyl-[protein] = an N-terminal L-phenylalanyl-L-alpha-aminoacyl-[protein] + tRNA(Phe). Its function is as follows. Functions in the N-end rule pathway of protein degradation where it conjugates Leu, Phe and, less efficiently, Met from aminoacyl-tRNAs to the N-termini of proteins containing an N-terminal arginine or lysine. This Cereibacter sphaeroides (strain KD131 / KCTC 12085) (Rhodobacter sphaeroides) protein is Leucyl/phenylalanyl-tRNA--protein transferase.